The chain runs to 306 residues: Pantothenate kinase (306 aa).

90 to 97 (GSVAVGKS) contributes to the ATP binding site.

It belongs to the prokaryotic pantothenate kinase family.

It is found in the cytoplasm. The catalysed reaction is (R)-pantothenate + ATP = (R)-4'-phosphopantothenate + ADP + H(+). Its pathway is cofactor biosynthesis; coenzyme A biosynthesis; CoA from (R)-pantothenate: step 1/5. This is Pantothenate kinase from Ligilactobacillus salivarius (strain UCC118) (Lactobacillus salivarius).